The primary structure comprises 454 residues: Allantoinase (454 aa).

6 residues coordinate Zn(2+): histidine 58, histidine 60, lysine 149, histidine 189, histidine 245, and aspartate 318. The residue at position 149 (lysine 149) is an N6-carboxylysine.

This sequence belongs to the metallo-dependent hydrolases superfamily. Allantoinase family. Homotetramer. It depends on Zn(2+) as a cofactor. In terms of processing, carboxylation allows a single lysine to coordinate two zinc ions.

The catalysed reaction is (S)-allantoin + H2O = allantoate + H(+). It participates in nitrogen metabolism; (S)-allantoin degradation; allantoate from (S)-allantoin: step 1/1. Its function is as follows. Catalyzes the conversion of allantoin (5-ureidohydantoin) to allantoic acid by hydrolytic cleavage of the five-member hydantoin ring. This is Allantoinase from Enterococcus faecalis (strain ATCC 700802 / V583).